Here is a 1055-residue protein sequence, read N- to C-terminus: Inactive exonuclease DIS3L2 (1055 aa).

Disordered stretches follow at residues M1–E109 and S229–Q249. A compositionally biased stretch (basic residues) spans H17–K32. Residues E39 to D59 show a composition bias toward basic and acidic residues. Over residues P97–P108 the composition is skewed to low complexity. Residues Y367–N446 form the CSD2 domain. Positions R476–E824 constitute an RNB domain. Mg(2+) contacts are provided by D488 and D497.

The protein belongs to the RNR ribonuclease family. DIS3L2 subfamily.

It is found in the cytoplasm. Its function is as follows. Probable inactive 3'-5'-exoribonuclease. Is unable to complement the growth defect of a yeast mutant lacking RRP44 exonuclease. The sequence is that of Inactive exonuclease DIS3L2 from Arabidopsis thaliana (Mouse-ear cress).